The sequence spans 159 residues: Ribosomal RNA large subunit methyltransferase H (159 aa).

Residues Leu76, Gly108, and 127–132 contribute to the S-adenosyl-L-methionine site; that span reads FGRLTL.

This sequence belongs to the RNA methyltransferase RlmH family. Homodimer.

It is found in the cytoplasm. The catalysed reaction is pseudouridine(1915) in 23S rRNA + S-adenosyl-L-methionine = N(3)-methylpseudouridine(1915) in 23S rRNA + S-adenosyl-L-homocysteine + H(+). Its function is as follows. Specifically methylates the pseudouridine at position 1915 (m3Psi1915) in 23S rRNA. The chain is Ribosomal RNA large subunit methyltransferase H from Streptococcus uberis (strain ATCC BAA-854 / 0140J).